The primary structure comprises 230 residues: Large ribosomal subunit protein uL1 (230 aa).

The protein belongs to the universal ribosomal protein uL1 family. Part of the 50S ribosomal subunit.

Binds directly to 23S rRNA. The L1 stalk is quite mobile in the ribosome, and is involved in E site tRNA release. In terms of biological role, protein L1 is also a translational repressor protein, it controls the translation of the L11 operon by binding to its mRNA. This Limosilactobacillus reuteri subsp. reuteri (strain JCM 1112) (Lactobacillus reuteri) protein is Large ribosomal subunit protein uL1.